The sequence spans 510 residues: Cytochrome P450 monooxygenase ptmK (510 aa).

Residues 2–22 (IIVTFFWVGIVLSAIWTFYKV) form a helical membrane-spanning segment. N-linked (GlcNAc...) asparagine glycans are attached at residues asparagine 313, asparagine 408, and asparagine 443. Cysteine 456 is a binding site for heme.

Belongs to the cytochrome P450 family. Requires heme as cofactor.

The protein resides in the membrane. It participates in secondary metabolite biosynthesis. Its function is as follows. Cytochrome P450 monooxygenase; part of the gene cluster that mediates the biosynthesis of the indole diterpenes penitrems. The geranylgeranyl diphosphate (GGPP) synthase ptmG catalyzes the first step in penitrem biosynthesis via conversion of farnesyl pyrophosphate and isopentyl pyrophosphate into geranylgeranyl pyrophosphate (GGPP). Condensation of indole-3-glycerol phosphate with GGPP by the prenyl transferase ptmC then forms 3-geranylgeranylindole (3-GGI). Epoxidation by the FAD-dependent monooxygenase ptmM leads to a epoxidized-GGI that is substrate of the terpene cyclase ptmB for cyclization to yield paspaline. Paspaline is subsequently converted to 13-desoxypaxilline by the cytochrome P450 monooxygenase ptmP, the latter being then converted to paxilline by the cytochrome P450 monooxygenase ptmQ. Paxilline is converted to beta-paxitriol via C-10 ketoreduction by the short-chain dehydrogenase ptmH which can be monoprenylated at the C-20 by the indole diterpene prenyltransferase ptmD. A two-step elimination (acetylation and elimination) process performed by the O-acetyltransferase ptmV and ptmI leads to the production of the prenylated form of penijanthine. The FAD-linked oxidoreductase ptmO then converts the prenylated form of penijanthine into PC-M5 which is in turn transformed into PC-M4 by the aromatic dimethylallyltransferase ptmE. Five sequential oxidative transformations performed by the cytochrome P450 monooxygenases ptmK, ptmU, ptmL, ptmN and ptmJ yield the various penitrem compounds. PtmK, ptmU and ptmM are involved in the formation of the key bicyclic ring of penitrem C via the formation of the intermediates secopenitrem D and penitrem D. PtmL catalyzes the epoxidation of penitrem D and C to yield penitrem B and F, respectively. PtmJ catalyzes the last benzylic hydroxylation to convert penitrem B to prenitrem E and penitrem F to penitrem A. This is Cytochrome P450 monooxygenase ptmK from Penicillium ochrochloron.